The sequence spans 266 residues: Dickkopf-related protein 1 (266 aa).

The N-terminal stretch at 1–31 (MMALGAAGATRVFVAMVAAALGGHPLLGVSA) is a signal peptide. The O-linked (GalNAc...) serine glycan is linked to Ser61. 10 cysteine pairs are disulfide-bonded: Cys85-Cys97, Cys91-Cys111, Cys114-Cys128, Cys121-Cys133, Cys127-Cys138, Cys189-Cys201, Cys195-Cys210, Cys200-Cys237, Cys220-Cys245, and Cys239-Cys263. The segment at 85–138 (CAEDEECGTDEYCASPTRGGDAGVQICLACRKRRKRCMRHAMCCPGNYCKNGIC) is DKK-type Cys-1. Residues 189–263 (CLRSSDCASG…ASNSSRLHTC (75 aa)) are DKK-type Cys-2. Asn256 carries N-linked (GlcNAc...) asparagine glycosylation.

Belongs to the dickkopf family. Interacts with LRP6. Interacts (via the C-terminal Cys-rich domain) with LRP5 (via beta-propeller regions 3 and 4); the interaction, enhanced by MESD and or KREMEN, antagonizes Wnt-mediated signaling. Forms a ternary complex with LRP6 and KREM1. Interacts with KREM1. As to expression, placenta.

The protein localises to the secreted. Antagonizes canonical Wnt signaling by inhibiting LRP5/6 interaction with Wnt and by forming a ternary complex with the transmembrane protein KREMEN that promotes internalization of LRP5/6. DKKs play an important role in vertebrate development, where they locally inhibit Wnt regulated processes such as antero-posterior axial patterning, limb development, somitogenesis and eye formation. In the adult, Dkks are implicated in bone formation and bone disease, cancer and Alzheimer disease. Inhibits the pro-apoptotic function of KREMEN1 in a Wnt-independent manner, and has anti-apoptotic activity. The sequence is that of Dickkopf-related protein 1 (DKK1) from Homo sapiens (Human).